Here is a 440-residue protein sequence, read N- to C-terminus: Argininosuccinate lyase (440 aa).

Belongs to the lyase 1 family. Argininosuccinate lyase subfamily.

The protein localises to the cytoplasm. The enzyme catalyses 2-(N(omega)-L-arginino)succinate = fumarate + L-arginine. The protein operates within amino-acid biosynthesis; L-arginine biosynthesis; L-arginine from L-ornithine and carbamoyl phosphate: step 3/3. This is Argininosuccinate lyase from Clostridium botulinum (strain Langeland / NCTC 10281 / Type F).